A 362-amino-acid polypeptide reads, in one-letter code: Phosphoserine aminotransferase (362 aa).

Serine 9 and arginine 42 together coordinate L-glutamate. Residues 76–77 (AR), tryptophan 102, threonine 153, aspartate 174, and glutamine 197 contribute to the pyridoxal 5'-phosphate site. Position 198 is an N6-(pyridoxal phosphate)lysine (lysine 198). Residue 239-240 (NT) coordinates pyridoxal 5'-phosphate.

The protein belongs to the class-V pyridoxal-phosphate-dependent aminotransferase family. SerC subfamily. Homodimer. Pyridoxal 5'-phosphate serves as cofactor.

The protein localises to the cytoplasm. The enzyme catalyses O-phospho-L-serine + 2-oxoglutarate = 3-phosphooxypyruvate + L-glutamate. The catalysed reaction is 4-(phosphooxy)-L-threonine + 2-oxoglutarate = (R)-3-hydroxy-2-oxo-4-phosphooxybutanoate + L-glutamate. It participates in amino-acid biosynthesis; L-serine biosynthesis; L-serine from 3-phospho-D-glycerate: step 2/3. It functions in the pathway cofactor biosynthesis; pyridoxine 5'-phosphate biosynthesis; pyridoxine 5'-phosphate from D-erythrose 4-phosphate: step 3/5. Functionally, catalyzes the reversible conversion of 3-phosphohydroxypyruvate to phosphoserine and of 3-hydroxy-2-oxo-4-phosphonooxybutanoate to phosphohydroxythreonine. In Photorhabdus laumondii subsp. laumondii (strain DSM 15139 / CIP 105565 / TT01) (Photorhabdus luminescens subsp. laumondii), this protein is Phosphoserine aminotransferase.